A 247-amino-acid polypeptide reads, in one-letter code: 2,3-bisphosphoglycerate-dependent phosphoglycerate mutase (247 aa).

Substrate contacts are provided by residues 13–20 (RHGESDWN), 26–27 (TG), arginine 65, 92–95 (ERHY), lysine 103, 119–120 (RR), and 186–187 (GN). Histidine 14 (tele-phosphohistidine intermediate) is an active-site residue. Residue glutamate 92 is the Proton donor/acceptor of the active site.

It belongs to the phosphoglycerate mutase family. BPG-dependent PGAM subfamily. In terms of assembly, homotetramer, dimer of dimers.

It catalyses the reaction (2R)-2-phosphoglycerate = (2R)-3-phosphoglycerate. It participates in carbohydrate degradation; glycolysis; pyruvate from D-glyceraldehyde 3-phosphate: step 3/5. Catalyzes the interconversion of 2-phosphoglycerate and 3-phosphoglycerate. The protein is 2,3-bisphosphoglycerate-dependent phosphoglycerate mutase of Mycobacterium leprae (strain Br4923).